We begin with the raw amino-acid sequence, 408 residues long: DNA primase DnaG (408 aa).

One can recognise a Toprim domain in the interval 165-243; it reads PELIIVEGRA…KIDYVARAPT (79 aa). Residues Glu-171, Asp-216, and Asp-218 each coordinate Mg(2+).

This sequence belongs to the archaeal DnaG primase family. As to quaternary structure, forms a ternary complex with MCM helicase and DNA. Component of the archaeal exosome complex. It depends on Mg(2+) as a cofactor.

It carries out the reaction ssDNA + n NTP = ssDNA/pppN(pN)n-1 hybrid + (n-1) diphosphate.. In terms of biological role, RNA polymerase that catalyzes the synthesis of short RNA molecules used as primers for DNA polymerase during DNA replication. Also part of the exosome, which is a complex involved in RNA degradation. Acts as a poly(A)-binding protein that enhances the interaction between heteromeric, adenine-rich transcripts and the exosome. The chain is DNA primase DnaG from Sulfurisphaera tokodaii (strain DSM 16993 / JCM 10545 / NBRC 100140 / 7) (Sulfolobus tokodaii).